The following is a 189-amino-acid chain: Calcyphosin (189 aa).

4 consecutive EF-hand domains span residues 21–56, 57–92, 93–128, and 136–172; these read SGIQ…LGLV, LDTA…PMSQ, AREA…RTHP, and TEEQ…VSAS. Residues D34, D36, S38, S40, E45, D70, D72, S74, T76, E81, D106, S108, D110, and D117 each coordinate Ca(2+). Position 40 is a phosphoserine; by PKA (S40).

Monomer. Does not form oligomers in the presence of calcium.

It is found in the cytoplasm. Functionally, calcium-binding protein. May play a role in cellular signaling events (Potential). This chain is Calcyphosin (CAPS), found in Bos taurus (Bovine).